Consider the following 269-residue polypeptide: Adenosylcobinamide-GDP ribazoletransferase (269 aa).

The next 5 helical transmembrane spans lie at 8–28, 41–61, 70–90, 114–136, and 196–216; these read QFNLILLAVSFFTRLPVPTAI, YFPLVGWLLAALLSAFYCFML, VCLLIIFSLMLTGAIHEDGLA, IGTYGTCALICALLSKFILLSSL, and VPAVLWLPLSSAILVIVSACV.

It belongs to the CobS family. Mg(2+) serves as cofactor.

The protein localises to the cell inner membrane. It carries out the reaction alpha-ribazole + adenosylcob(III)inamide-GDP = adenosylcob(III)alamin + GMP + H(+). It catalyses the reaction alpha-ribazole 5'-phosphate + adenosylcob(III)inamide-GDP = adenosylcob(III)alamin 5'-phosphate + GMP + H(+). Its pathway is cofactor biosynthesis; adenosylcobalamin biosynthesis; adenosylcobalamin from cob(II)yrinate a,c-diamide: step 7/7. Its function is as follows. Joins adenosylcobinamide-GDP and alpha-ribazole to generate adenosylcobalamin (Ado-cobalamin). Also synthesizes adenosylcobalamin 5'-phosphate from adenosylcobinamide-GDP and alpha-ribazole 5'-phosphate. The protein is Adenosylcobinamide-GDP ribazoletransferase of Pseudoalteromonas atlantica (strain T6c / ATCC BAA-1087).